A 206-amino-acid chain; its full sequence is Small ribosomal subunit protein uS4 (206 aa).

The 63-residue stretch at 96–158 (SRLDNVVYRM…AKGQLRIKGA (63 aa)) folds into the S4 RNA-binding domain.

Belongs to the universal ribosomal protein uS4 family. As to quaternary structure, part of the 30S ribosomal subunit. Contacts protein S5. The interaction surface between S4 and S5 is involved in control of translational fidelity.

In terms of biological role, one of the primary rRNA binding proteins, it binds directly to 16S rRNA where it nucleates assembly of the body of the 30S subunit. With S5 and S12 plays an important role in translational accuracy. This chain is Small ribosomal subunit protein uS4, found in Coxiella burnetii (strain CbuG_Q212) (Coxiella burnetii (strain Q212)).